We begin with the raw amino-acid sequence, 493 residues long: MKASIYLVTVFILLLLLLPTAIPHDYSDALRKSILFFEGQRSGRLPKQQRMAWRRNSALNDGKNLKTDLVGGYYDAGDNVKFHFPMAFTATMLAWSSVDFGRYMSQHDFRHNLVAVKWATDYLLKTVSQLPNRIFVHVGEVQPDHDCWERPEDMDTPRTAFALDAPYPASDLAGEIAAALAAASIAFKQANPKYSAILLNKAVQTFQYADSHRGSYTDNPGIKQAVCPFYCSVNGYKDELLWGAAWLRRATGEDSYLRYLVDNGQAFGESSNYFEFGWDNKVGGVNVLVAKEVLQNNVTAIAAYKDTAEKMMCSFLPETNGPHMSYTPGGLIYKPGSTQLQNTAALSFLLLTYADYLSTSSQQLNCGNLKFQPDSLRRIVKRQVDYVLGDNPMKLSYMIGYGERYPGLIHHRGSSIPSVTVHPAAFGCIAGWNIFSSPNPNPNILIGAVIGGPDVDDRFIGGRTNASETEPTTYINAPFVGVFAYFKSNPNFS.

Residues 1–23 (MKASIYLVTVFILLLLLLPTAIP) form the signal peptide. Asp-78 serves as the catalytic Nucleophile. Residue Asn-297 is glycosylated (N-linked (GlcNAc...) asparagine). His-410 is an active-site residue. A glycan (N-linked (GlcNAc...) asparagine) is linked at Asn-465. Glu-470 is a catalytic residue.

Belongs to the glycosyl hydrolase 9 (cellulase E) family.

It localises to the secreted. The enzyme catalyses Endohydrolysis of (1-&gt;4)-beta-D-glucosidic linkages in cellulose, lichenin and cereal beta-D-glucans.. The protein is Endoglucanase 23 of Arabidopsis thaliana (Mouse-ear cress).